We begin with the raw amino-acid sequence, 122 residues long: MKYLLIALGGGTGSLARYLLGTAITSRVGARFPIGTMVVNVSGCFAIGLAMTLLTERLQPHPYWRLALVVGFLGGYTTFSSFEWETYAAVREGGFWIGLANVLGSVTLGYAAVWFGALLARR.

The next 4 helical transmembrane spans lie at 4–24 (LLIA…GTAI), 34–54 (IGTM…MTLL), 66–86 (LALV…EWET), and 95–115 (FWIG…AVWF). 2 residues coordinate Na(+): Gly74 and Thr77.

The protein belongs to the fluoride channel Fluc/FEX (TC 1.A.43) family.

The protein localises to the cell inner membrane. The catalysed reaction is fluoride(in) = fluoride(out). Na(+) is not transported, but it plays an essential structural role and its presence is essential for fluoride channel function. Fluoride-specific ion channel. Important for reducing fluoride concentration in the cell, thus reducing its toxicity. The chain is Fluoride-specific ion channel FluC from Solibacter usitatus (strain Ellin6076).